The chain runs to 204 residues: MGGVFVVFEGGDGAGKTTQARLLDQWLTTEGIPHLMTREPGDSWLGQRIRELVLSPGSGPISSRAEALLYNADKAQHVDEVVIPALREGKVVVCDRYVDSTIAYQGAGRALDPGEVGQLACWATTGLVPDVTVLLDVDPCEGAGKIAAKDRLEAAGDEFHLRVRQHFLDLAAAHPQRYLVLNARKSRKEISEAIRQRVTGLLNR.

10–17 (GGDGAGKT) contacts ATP.

Belongs to the thymidylate kinase family.

The catalysed reaction is dTMP + ATP = dTDP + ADP. Phosphorylation of dTMP to form dTDP in both de novo and salvage pathways of dTTP synthesis. This is Thymidylate kinase from Cutibacterium acnes (strain DSM 16379 / KPA171202) (Propionibacterium acnes).